The chain runs to 314 residues: tRNA pseudouridine synthase B (314 aa).

Residue His43 coordinates substrate. Asp48 acts as the Nucleophile in catalysis. Substrate is bound by residues Tyr76, Tyr179, and Leu200.

Belongs to the pseudouridine synthase TruB family. Type 1 subfamily.

It carries out the reaction uridine(55) in tRNA = pseudouridine(55) in tRNA. Its function is as follows. Responsible for synthesis of pseudouridine from uracil-55 in the psi GC loop of transfer RNAs. The chain is tRNA pseudouridine synthase B from Citrobacter koseri (strain ATCC BAA-895 / CDC 4225-83 / SGSC4696).